Reading from the N-terminus, the 176-residue chain is Disulfide bond formation protein B (176 aa).

Topologically, residues 1–14 (MLQFLNRCSKGRGA) are cytoplasmic. Residues 15–31 (WLLMALTALVLELVALY) form a helical membrane-spanning segment. Over 32-49 (FQHVMLLQPCVMCIYERA) the chain is Periplasmic. Cys41 and Cys44 are disulfide-bonded. Residues 50–65 (ALFGILGASLLGAIAP) form a helical membrane-spanning segment. Over 66 to 71 (KSPLRY) the chain is Cytoplasmic. The helical transmembrane segment at 72 to 89 (LAIFIWIYSAWKGVQLAW) threads the bilayer. Residues 90–144 (THTMLQLHPSPFTTCDFFVSFPSWLPLDKWFPAVFVASGDCAVKQWEFLSLEMPQ) are Periplasmic-facing. Cys104 and Cys130 are disulfide-bonded. A helical transmembrane segment spans residues 145 to 163 (WLVGIFAAYLFIAILVLIS). Topologically, residues 164–176 (QFVKPKRRDLFSR) are cytoplasmic.

Belongs to the DsbB family.

It localises to the cell inner membrane. Functionally, required for disulfide bond formation in some periplasmic proteins. Acts by oxidizing the DsbA protein. This chain is Disulfide bond formation protein B, found in Yersinia enterocolitica serotype O:8 / biotype 1B (strain NCTC 13174 / 8081).